A 77-amino-acid polypeptide reads, in one-letter code: MSDVADRVKKIVVEHLGVEEDKVTENASFIDDLGADSLDTVELVMAFEEEFGIEIPDDAAETIQTFGDAVKFISEAS.

The Carrier domain maps to 2 to 77; that stretch reads SDVADRVKKI…DAVKFISEAS (76 aa). Ser-37 carries the O-(pantetheine 4'-phosphoryl)serine modification.

The protein belongs to the acyl carrier protein (ACP) family. Post-translationally, 4'-phosphopantetheine is transferred from CoA to a specific serine of apo-ACP by AcpS. This modification is essential for activity because fatty acids are bound in thioester linkage to the sulfhydryl of the prosthetic group.

The protein localises to the cytoplasm. Its pathway is lipid metabolism; fatty acid biosynthesis. Carrier of the growing fatty acid chain in fatty acid biosynthesis. The polypeptide is Acyl carrier protein (Ruegeria pomeroyi (strain ATCC 700808 / DSM 15171 / DSS-3) (Silicibacter pomeroyi)).